Consider the following 166-residue polypeptide: 2-amino-4-hydroxy-6-hydroxymethyldihydropteridine pyrophosphokinase (166 aa).

It belongs to the HPPK family.

It catalyses the reaction 6-hydroxymethyl-7,8-dihydropterin + ATP = (7,8-dihydropterin-6-yl)methyl diphosphate + AMP + H(+). Its pathway is cofactor biosynthesis; tetrahydrofolate biosynthesis; 2-amino-4-hydroxy-6-hydroxymethyl-7,8-dihydropteridine diphosphate from 7,8-dihydroneopterin triphosphate: step 4/4. In terms of biological role, catalyzes the transfer of pyrophosphate from adenosine triphosphate (ATP) to 6-hydroxymethyl-7,8-dihydropterin, an enzymatic step in folate biosynthesis pathway. The protein is 2-amino-4-hydroxy-6-hydroxymethyldihydropteridine pyrophosphokinase (folK) of Streptococcus pyogenes serotype M18 (strain MGAS8232).